The following is a 261-amino-acid chain: ATP synthase subunit a (261 aa).

6 helical membrane passes run 45–65 (ITNVTMWMAIAVLVIAAILVL), 107–127 (VMTLFLFVLCGNVLGLLPLSF), 133–153 (MAVTVPLALMVFVGVTALGFM), 162–182 (MFWVTSAPLAIRPVLAVIEVI), 209–229 (IAGFASIVVVSPVVVGAVTAI), and 232–252 (LELLVAVVQAYVFTILTCVYL).

This sequence belongs to the ATPase A chain family. F-type ATPases have 2 components, CF(1) - the catalytic core - and CF(0) - the membrane proton channel. CF(1) has five subunits: alpha(3), beta(3), gamma(1), delta(1), epsilon(1). CF(0) has four main subunits: a, b, b' and c.

The protein localises to the cell inner membrane. In terms of biological role, key component of the proton channel; it plays a direct role in the translocation of protons across the membrane. The sequence is that of ATP synthase subunit a from Cereibacter sphaeroides (strain ATCC 17029 / ATH 2.4.9) (Rhodobacter sphaeroides).